A 78-amino-acid chain; its full sequence is Large ribosomal subunit protein bL28 (78 aa).

This sequence belongs to the bacterial ribosomal protein bL28 family.

In Alcanivorax borkumensis (strain ATCC 700651 / DSM 11573 / NCIMB 13689 / SK2), this protein is Large ribosomal subunit protein bL28.